A 474-amino-acid polypeptide reads, in one-letter code: Microtubule protein alp7 (474 aa).

Residues 1-20 (MSDIVSSSTDYSRRSPSSSS) are compositionally biased toward low complexity. Disordered stretches follow at residues 1–79 (MSDI…DTLN), 93–114 (KSFD…LSQH), and 164–223 (SLQT…NSTQ). The residue at position 17 (Ser17) is a Phosphoserine. The segment covering 25-36 (ETDHTGFHEKRQ) has biased composition (basic and acidic residues). A compositionally biased stretch (polar residues) spans 66–76 (SKPNPQLNLKD). 2 stretches are compositionally biased toward polar residues: residues 177–189 (SNGS…NTAP) and 201–223 (RNSA…NSTQ). Coiled coils occupy residues 219–273 (INST…QLRS) and 367–471 (KISN…LNLE).

Interacts with alp14.

The protein localises to the nucleus. It localises to the cytoplasm. It is found in the cytoskeleton. The protein resides in the spindle. Its subcellular location is the chromosome. The protein localises to the centromere. It localises to the kinetochore. Its function is as follows. Required for bipolar spindle formation and proper chromosome segregation. Has an indirect role in connecting the kinetochores and the plus end of pole to chromosome microtubules by targeting alp14 to the spindle pole body. Involved in the emergence of large microtubule organizing centers (MTOC) in interphase cells. Attaches to the minus ends of microtubules and associates with the sites of microtubule attachment on the nuclear envelope. This leads to the stabilization of the microtubule bundles. The protein is Microtubule protein alp7 (alp7) of Schizosaccharomyces pombe (strain 972 / ATCC 24843) (Fission yeast).